The following is a 534-amino-acid chain: Apolipoprotein N-acyltransferase (534 aa).

7 consecutive transmembrane segments (helical) span residues 18-38 (LLAIAAGAFAVLALPPFGFFA), 39-59 (AMFLSFTLLVWLIDGAAASPD), 74-94 (WLFGFGYFVAGLWWLGHALLV), 105-125 (LAILGLPACLAIFYGLAVALA), 127-147 (IFWSDGMGRIAALAAGFGLME), 178-198 (VIGAMGVTALAVFVFSAPALA), and 209-229 (ALAVLLFAAHLGYGAYALYVA). Residues 246–496 (VQPDIDQAAK…TGFIDATVDR (251 aa)) enclose the CN hydrolase domain. The active-site Proton acceptor is the Glu-291. Residue Lys-355 is part of the active site. Cys-408 (nucleophile) is an active-site residue. Residues 504–524 (TFPRQTYFWLTEALLILIALV) traverse the membrane as a helical segment.

Belongs to the CN hydrolase family. Apolipoprotein N-acyltransferase subfamily.

It localises to the cell inner membrane. It catalyses the reaction N-terminal S-1,2-diacyl-sn-glyceryl-L-cysteinyl-[lipoprotein] + a glycerophospholipid = N-acyl-S-1,2-diacyl-sn-glyceryl-L-cysteinyl-[lipoprotein] + a 2-acyl-sn-glycero-3-phospholipid + H(+). It participates in protein modification; lipoprotein biosynthesis (N-acyl transfer). Its function is as follows. Catalyzes the phospholipid dependent N-acylation of the N-terminal cysteine of apolipoprotein, the last step in lipoprotein maturation. This Rhizobium leguminosarum bv. trifolii (strain WSM2304) protein is Apolipoprotein N-acyltransferase.